A 54-amino-acid polypeptide reads, in one-letter code: Large ribosomal subunit protein bL33 (54 aa).

Belongs to the bacterial ribosomal protein bL33 family.

In Corynebacterium efficiens (strain DSM 44549 / YS-314 / AJ 12310 / JCM 11189 / NBRC 100395), this protein is Large ribosomal subunit protein bL33.